We begin with the raw amino-acid sequence, 345 residues long: Phosphoribosylformylglycinamidine cyclo-ligase (345 aa).

Belongs to the AIR synthase family.

The protein localises to the cytoplasm. The catalysed reaction is 2-formamido-N(1)-(5-O-phospho-beta-D-ribosyl)acetamidine + ATP = 5-amino-1-(5-phospho-beta-D-ribosyl)imidazole + ADP + phosphate + H(+). It participates in purine metabolism; IMP biosynthesis via de novo pathway; 5-amino-1-(5-phospho-D-ribosyl)imidazole from N(2)-formyl-N(1)-(5-phospho-D-ribosyl)glycinamide: step 2/2. In Lactobacillus acidophilus (strain ATCC 700396 / NCK56 / N2 / NCFM), this protein is Phosphoribosylformylglycinamidine cyclo-ligase.